The following is a 1026-amino-acid chain: MADLFDEFIEPGVKNEIMDVEEAPENPMEKLDSAKKRQAREDMTNLLANMHNDVGVGNFDEATSKRARVEEEEEVEEARMENIIVHTIRTDNENCTHEVAIPPNAEFAELRENSGTEPAKYYPFQLDAFQKQAILCIDNNQSVLVSAHTSAGKTVVATYAIAKCLREKQRVIYTSPIKALSNQKYRELEEEFKDVGLMTGDVTLNPDASCLVMTTEILRSMLYRGSEIMKEVGWVVYDEIHYMRDKERGVVWEETIILMSKNIKQAFLSATIPNARQFAQWVASIKQQPVNVVYTDYRPTPLQHWIYPVGGEGMYEVVNVKGEFREDKFRDAMSGLATAGDSAGSFNKRRTGGGTQGDSNVLKIIRSVASNDGLNCIVFSFSRKECESYAISLKDMDFNKDHEKGMVKSVYESAIAQLSPEDQKLPQILNILPLLRRGIGVHHSGLMPILKETIEILFGEGLVKVLFATETFSMGLNMPARTVVFTSARKFDGSDNRYITSGEYIQMAGRAGRRGKDDRGTVILMVDSAMSADDAKQIIKGATDPLNSQFRLTYNMVLNLMRVEGMAVSWIINNSFHQFQSYAKIPEIDKKCVQVERKIASFNFPWENEMRTLVDLQDQLEATRQRIIQIQREPKYIVGFLHAGRLFKVKSGDRDFKWGILNQFKKEQNPDDRNDQIYLCDMMIAINTEGRFDPTNPATLVPGFDLPKRRWIRVPMTIDRITAISAVRLKVPADIDKPDGQMRLDGMMAAATKRFGNQIPLLDPIQDMEIKTVEMKELIAREKSLEGRLETHSMTKRDNMKDLKKQFEQKQDAVKELNALKAERKSVQSTLHLEELNNRKRVLRRLGYLGNDDALVLKGSVACELSASDELILTEMLLKGIFNTLDVAQTAALLSCFVFQDKCAAPKLATELQTCLSELHEQARNVAKVSNECKMEVMEDKYVSSFNPGLMDVVYQWVNGATFSEIVKTTDVFEGSIIRTLRRLEEVLREMINAAKALANKELEQKFEDARKNLKRDIVFAASLYL.

One can recognise a Helicase ATP-binding domain in the interval 134–290 (ILCIDNNQSV…WVASIKQQPV (157 aa)). ATP is bound at residue 147-154 (AHTSAGKT). The DEIH box signature appears at 238–241 (DEIH). Residues 360–564 (NVLKIIRSVA…NMVLNLMRVE (205 aa)) form the Helicase C-terminal domain.

Belongs to the helicase family. SKI2 subfamily.

It is found in the nucleus. The protein is mRNA transport homolog 4 (mtr-4) of Caenorhabditis elegans.